The primary structure comprises 282 residues: Ribosome biogenesis GTPase A (282 aa).

The 165-residue stretch at 14–178 folds into the CP-type G domain; the sequence is RREVTEKLKL…LLDTPGILWP (165 aa). GTP contacts are provided by residues 58–61, 86–87, 130–135, and Gly174; these read NKAD, NS, and NVGKST.

It belongs to the TRAFAC class YlqF/YawG GTPase family. MTG1 subfamily. As to quaternary structure, interacts with ctc. Interacts with the immature 50S ribosome subunit. 2 molecules of rbgA bind to one 50S subunit.

The protein localises to the cytoplasm. In terms of biological role, essential protein that is required for a late step of 50S ribosomal subunit assembly. Has GTPase activity that is stimulated by interaction with the immature 50S ribosome subunit. Binds to the 23S rRNA. Required for the association of ribosomal proteins rplP and rpmA with the large subunit. This Bacillus spizizenii (strain ATCC 23059 / NRRL B-14472 / W23) (Bacillus subtilis subsp. spizizenii) protein is Ribosome biogenesis GTPase A (rbgA).